A 643-amino-acid chain; its full sequence is MERSPPQSPGPGKAGDAPNRRSGHVRGARVLSPPGRRARLSSPGPSRSSEAREELRRHLVGLIERSRVVIFSKSYCPHSTRVKELFSSLGVECNVLELDQVDDGARVQEVLSEITNQKTVPNIFVNKVHVGGCDQTFQAYQSGLLQKLLQEDLAYDYDLIIIGGGSGGLSCAKEAAILGKKVMVLDFVVPSPQGTSWGLGGTCVNVGCIPKKLMHQAALLGQALCDSRKFGWEYNQQVRHNWETMTKAIQNHISSLNWGYRLSLREKAVAYVNSYGEFVEHHKIKATNKKGQETYYTAAQFVIATGERPRYLGIQGDKEYCITSDDLFSLPYCPGKTLVVGASYVALECAGFLAGFGLDVTVMVRSILLRGFDQEMAEKVGSYMEQHGVKFLRKFIPVMVQQLEKGSPGKLKVLAKSTEGTETIEGVYNTVLLAIGRDSCTRKIGLEKIGVKINEKSGKIPVNDVEQTNVPYVYAVGDILEDKPELTPVAIQSGKLLAQRLFGASLEKCDYINVPTTVFTPLEYGCCGLSEEKAIEVYKKENLEIYHTLFWPLEWTVAGRENNTCYAKIICNKFDHDRVIGFHILGPNAGEVTQGFAAAMKCGLTKQLLDDTIGIHPTCGEVFTTLEITKSSGLDITQKGCUG.

A disordered region spans residues M1–E53. R26 carries the asymmetric dimethylarginine; alternate modification. Position 26 is an omega-N-methylarginine; alternate (R26). 2 positions are modified to phosphoserine: S41 and S42. Positions R56–D156 constitute a Glutaredoxin domain. D158 to F187 is a binding site for FAD. A disulfide bridge connects residues C203 and C208. K379 is modified (N6-succinyllysine). Catalysis depends on H616, which acts as the Proton acceptor. A cross-link (cysteinyl-selenocysteine (Cys-Sec)) is located at residues C641–U642. U642 is a non-standard amino acid (selenocysteine).

This sequence belongs to the class-I pyridine nucleotide-disulfide oxidoreductase family. Homodimer. FAD serves as cofactor.

It is found in the cytoplasm. The protein resides in the nucleus. It localises to the microsome. Its subcellular location is the endoplasmic reticulum. It catalyses the reaction [thioredoxin]-dithiol + NADP(+) = [thioredoxin]-disulfide + NADPH + H(+). Functionally, displays thioredoxin reductase, glutaredoxin and glutathione reductase activities. Catalyzes disulfide bond isomerization. Promotes disulfide bond formation between GPX4 and various sperm proteins and may play a role in sperm maturation by promoting formation of sperm structural components. This chain is Thioredoxin reductase 3, found in Homo sapiens (Human).